A 526-amino-acid polypeptide reads, in one-letter code: Zinc finger protein Helios (526 aa).

Positions 28–94 are disordered; sequence DLTSSTPNGQ…IESSEVADNR (67 aa). Positions 29 to 50 are enriched in polar residues; sequence LTSSTPNGQHASPSHMTSTNSV. S56 is subject to Phosphoserine. Basic and acidic residues predominate over residues 61–77; sequence DRQPLSREDEIRGHDEG. Phosphoserine occurs at positions 78 and 79. Residue K95 forms a Glycyl lysine isopeptide (Lys-Gly) (interchain with G-Cter in SUMO2) linkage. 4 consecutive C2H2-type zinc fingers follow at residues 112–134, 140–162, 168–190, and 196–219; these read LKCD…KRSH, FHCN…IKLH, FKCP…LRTH, and HKCN…ERCH. At K288 the chain carries N6-acetyllysine. The segment covering 368 to 379 has biased composition (basic and acidic residues); it reads ISRETSDSHENN. Positions 368–435 are disordered; it reads ISRETSDSHE…LNPKRKQSPA (68 aa). Residues K442 and K448 each participate in a glycyl lysine isopeptide (Lys-Gly) (interchain with G-Cter in SUMO2) cross-link. 2 C2H2-type zinc fingers span residues 471–493 and 499–523; these read FKCE…MGCH and LECN…RGEH.

It belongs to the Ikaros C2H2-type zinc-finger protein family. As to quaternary structure, can form homodimers. Interacts with IKZF4 and IKZF5. Expressed in outer hair cells (OHC) of the organ of Corti. Abundant in thymus, low expression in bone marrow and brain and no detectable expression in spleen, liver, kidney or muscle. Expressed in T-cells.

It localises to the nucleus. Its function is as follows. Transcriptional regulator required for outer hair cells (OHC) maturation and, consequently, for hearing. The polypeptide is Zinc finger protein Helios (Ikzf2) (Mus musculus (Mouse)).